The sequence spans 344 residues: Tripartite motif-containing protein 44 (344 aa).

The interval 69-165 is disordered; that stretch reads PPASGDDALP…ETEAESEFDP (97 aa). Residues 88–165 are compositionally biased toward acidic residues; sequence EGEVESEVGE…ETEAESEFDP (78 aa). The B box-type zinc-finger motif lies at 174–215; sequence VAKRKCPDHGLDLSTYCQEDRQLICVLCPVIGAHRGHQLSTL. 4 residues coordinate Zn(2+): Cys-179, His-182, Cys-201, and His-207. A coiled-coil region spans residues 290 to 325; sequence AHVTEILADIQSHMDRLMTQMAQAKEQLDTSNESAE. The interval 309 to 344 is disordered; the sequence is QMAQAKEQLDTSNESAEPKAEGDEEGPSGASEEEDT. Residues 330–344 show a composition bias toward acidic residues; that stretch reads GDEEGPSGASEEEDT. A phosphoserine mark is found at Ser-336 and Ser-339.

In terms of assembly, interacts (via coiled coil) with TRIM17 (via coiled coil).

Functionally, may play a role in the process of differentiation and maturation of neuronal cells. May regulate the activity of TRIM17. Is a negative regulator of PAX6 expression. This Rattus norvegicus (Rat) protein is Tripartite motif-containing protein 44 (Trim44).